The sequence spans 92 residues: Cell division topological specificity factor (92 aa).

The protein belongs to the MinE family.

Its function is as follows. Prevents the cell division inhibition by proteins MinC and MinD at internal division sites while permitting inhibition at polar sites. This ensures cell division at the proper site by restricting the formation of a division septum at the midpoint of the long axis of the cell. The chain is Cell division topological specificity factor from Gluconobacter oxydans (strain 621H) (Gluconobacter suboxydans).